Here is a 291-residue protein sequence, read N- to C-terminus: tRNA dimethylallyltransferase (291 aa).

G5–S12 is an ATP binding site. A substrate-binding site is contributed by T7–S12. The segment at D30–Q33 is interaction with substrate tRNA.

The protein belongs to the IPP transferase family. As to quaternary structure, monomer. It depends on Mg(2+) as a cofactor.

It catalyses the reaction adenosine(37) in tRNA + dimethylallyl diphosphate = N(6)-dimethylallyladenosine(37) in tRNA + diphosphate. In terms of biological role, catalyzes the transfer of a dimethylallyl group onto the adenine at position 37 in tRNAs that read codons beginning with uridine, leading to the formation of N6-(dimethylallyl)adenosine (i(6)A). This is tRNA dimethylallyltransferase from Frankia casuarinae (strain DSM 45818 / CECT 9043 / HFP020203 / CcI3).